The sequence spans 453 residues: UDP-N-acetylmuramate--L-alanine ligase (453 aa).

112-118 (GTHGKTT) provides a ligand contact to ATP.

Belongs to the MurCDEF family.

It localises to the cytoplasm. The enzyme catalyses UDP-N-acetyl-alpha-D-muramate + L-alanine + ATP = UDP-N-acetyl-alpha-D-muramoyl-L-alanine + ADP + phosphate + H(+). It participates in cell wall biogenesis; peptidoglycan biosynthesis. Functionally, cell wall formation. The protein is UDP-N-acetylmuramate--L-alanine ligase of Bdellovibrio bacteriovorus (strain ATCC 15356 / DSM 50701 / NCIMB 9529 / HD100).